The sequence spans 159 residues: Transcription elongation factor A protein-like 1 (159 aa).

Residues 1–121 (MDKPRKENEE…QFKGDIHGRN (121 aa)) are disordered. The span at 17-34 (KTDEERPPVEHSPEKQSP) shows a compositional bias: basic and acidic residues. A compositionally biased stretch (acidic residues) spans 37–54 (QSSEEQSSEEEFFPEELL). 2 stretches are compositionally biased toward basic and acidic residues: residues 64–80 (SEERPPQEGLSRKDLFE) and 95–119 (HKLEEGSFKERLARSRPQFKGDIHG).

It belongs to the TFS-II family. TFA subfamily.

Its subcellular location is the nucleus. Its function is as follows. May be involved in transcriptional regulation. Modulates various viral and cellular promoters in a promoter context-dependent manner. Does not bind DNA directly. This Gorilla gorilla gorilla (Western lowland gorilla) protein is Transcription elongation factor A protein-like 1.